Here is a 336-residue protein sequence, read N- to C-terminus: Flavonoid 6-O-methyltransferase 4 (336 aa).

2 residues coordinate S-adenosyl-L-methionine: Tyr-140 and Asp-203. His-241 functions as the Proton acceptor in the catalytic mechanism.

Belongs to the class I-like SAM-binding methyltransferase superfamily. Cation-independent O-methyltransferase family. As to quaternary structure, homodimer. As to expression, expressed in leaves.

The enzyme catalyses ladanein + S-adenosyl-L-methionine = salvigenin + S-adenosyl-L-homocysteine + H(+). It carries out the reaction scutellarein 7-methyl ether + S-adenosyl-L-methionine = cirsimaritin + S-adenosyl-L-homocysteine + H(+). It functions in the pathway flavonoid metabolism. Its function is as follows. Flavonoid 6-O-methyltransferase involved in the biosynthesis of polymethoxylated flavonoids natural products such as nevadensin and salvigenin (SALV), aroma compounds which contribute to the flavor of sweet basil, and exhibit pharmacological activities such as anti-allergic, anti-oxidant, antibacterial, anti-proliferative, and anti-inflammatory effects. Catalyzes S-adenosylmethionine-dependent regioselective 6-O-methylation of flavonoids; active on various hydroxylated flavonoid substrates, including scutellarein-7-methyl ether (SCU7Me) and ladanein (LAD). The protein is Flavonoid 6-O-methyltransferase 4 of Ocimum basilicum (Sweet basil).